Reading from the N-terminus, the 115-residue chain is T cell receptor beta variable 18 (115 aa).

The N-terminal stretch at 1–21 (MDTRLLCCAVICLLGAGLSNA) is a signal peptide. An Ig-like domain is found at 22-115 (GVMQNPRHLV…SAAYFCASSP (94 aa)). Cysteine 42 and cysteine 111 form a disulfide bridge.

As to quaternary structure, alpha-beta TR is a heterodimer composed of an alpha and beta chain; disulfide-linked. The alpha-beta TR is associated with the transmembrane signaling CD3 coreceptor proteins to form the TR-CD3 (TcR or TCR). The assembly of alpha-beta TR heterodimers with CD3 occurs in the endoplasmic reticulum where a single alpha-beta TR heterodimer associates with one CD3D-CD3E heterodimer, one CD3G-CD3E heterodimer and one CD247 homodimer forming a stable octameric structure. CD3D-CD3E and CD3G-CD3E heterodimers preferentially associate with TR alpha and TR beta chains, respectively. The association of the CD247 homodimer is the last step of TcR assembly in the endoplasmic reticulum and is required for transport to the cell surface.

It is found in the cell membrane. V region of the variable domain of T cell receptor (TR) beta chain that participates in the antigen recognition. Alpha-beta T cell receptors are antigen specific receptors which are essential to the immune response and are present on the cell surface of T lymphocytes. Recognize peptide-major histocompatibility (MH) (pMH) complexes that are displayed by antigen presenting cells (APC), a prerequisite for efficient T cell adaptive immunity against pathogens. Binding of alpha-beta TR to pMH complex initiates TR-CD3 clustering on the cell surface and intracellular activation of LCK that phosphorylates the ITAM motifs of CD3G, CD3D, CD3E and CD247 enabling the recruitment of ZAP70. In turn ZAP70 phosphorylates LAT, which recruits numerous signaling molecules to form the LAT signalosome. The LAT signalosome propagates signal branching to three major signaling pathways, the calcium, the mitogen-activated protein kinase (MAPK) kinase and the nuclear factor NF-kappa-B (NF-kB) pathways, leading to the mobilization of transcription factors that are critical for gene expression and essential for T cell growth and differentiation. The T cell repertoire is generated in the thymus, by V-(D)-J rearrangement. This repertoire is then shaped by intrathymic selection events to generate a peripheral T cell pool of self-MH restricted, non-autoaggressive T cells. Post-thymic interaction of alpha-beta TR with the pMH complexes shapes TR structural and functional avidity. The protein is T cell receptor beta variable 18 of Homo sapiens (Human).